The sequence spans 341 residues: L-threonine 3-dehydrogenase (341 aa).

Cys-38 provides a ligand contact to Zn(2+). Catalysis depends on charge relay system residues Thr-40 and His-43. Zn(2+) is bound by residues His-63, Glu-64, Cys-93, Cys-96, Cys-99, and Cys-107. Residues Ile-175, Asp-195, Arg-200, 262–264 (LGI), and 286–287 (IY) contribute to the NAD(+) site.

The protein belongs to the zinc-containing alcohol dehydrogenase family. Homotetramer. Requires Zn(2+) as cofactor.

The protein localises to the cytoplasm. It carries out the reaction L-threonine + NAD(+) = (2S)-2-amino-3-oxobutanoate + NADH + H(+). Its pathway is amino-acid degradation; L-threonine degradation via oxydo-reductase pathway; glycine from L-threonine: step 1/2. Its function is as follows. Catalyzes the NAD(+)-dependent oxidation of L-threonine to 2-amino-3-ketobutyrate. In Shigella dysenteriae serotype 1 (strain Sd197), this protein is L-threonine 3-dehydrogenase.